Reading from the N-terminus, the 543-residue chain is Chaperonin GroEL (543 aa).

Residues 29–32 (TLGP), 86–90 (DGTTT), G413, 477–479 (DAL), and D493 contribute to the ATP site.

This sequence belongs to the chaperonin (HSP60) family. As to quaternary structure, forms a cylinder of 14 subunits composed of two heptameric rings stacked back-to-back. Interacts with the co-chaperonin GroES.

The protein localises to the cytoplasm. It carries out the reaction ATP + H2O + a folded polypeptide = ADP + phosphate + an unfolded polypeptide.. In terms of biological role, together with its co-chaperonin GroES, plays an essential role in assisting protein folding. The GroEL-GroES system forms a nano-cage that allows encapsulation of the non-native substrate proteins and provides a physical environment optimized to promote and accelerate protein folding. The sequence is that of Chaperonin GroEL from Clostridium botulinum.